Here is an 802-residue protein sequence, read N- to C-terminus: Spondin-1 (802 aa).

Positions 1-23 (MAARLRPLALRLLARTFPLVARG) are cleaved as a signal peptide. A Reelin domain is found at 24-189 (FSDETLEKAA…DSASEGVTDK (166 aa)). Intrachain disulfides connect C39/C123, C151/C177, C194/C331, C195/C335, C197/C410, C438/C475, C449/C484, C454/C489, C497/C533, C508/C512, C543/C549, C554/C590, C565/C569, C600/C605, C610/C645, C621/C625, and C655/C660. The Spondin domain maps to 190 to 383 (PTLDCCACGT…LTSLDHPQSP (194 aa)). N209 carries an N-linked (GlcNAc...) asparagine glycan. 3 residues coordinate Ca(2+): D320, D349, and D353. TSP type-1 domains follow at residues 437 to 490 (TCIY…PGCS), 496 to 550 (TCMM…EECS), 553 to 606 (SCLV…PECH), 609 to 661 (PCLL…PECP), 663 to 716 (DCEL…RKCL), and 749 to 801 (VCRL…NVHP). The N-linked (GlcNAc...) asparagine glycan is linked to N676.

The protein resides in the secreted. It localises to the extracellular space. The protein localises to the extracellular matrix. Cell adhesion protein that promotes the attachment of spinal cord and sensory neuron cells and the outgrowth of neurites in vitro. May contribute to the growth and guidance of axons in both the spinal cord and the PNS. Somite-derived spondin 1 is an inhibitory signal involved in patterning the segmental migration of neural crest cells and their topographical segregation within the rostral somites in vitro. May be required to prevent the lateral drifting of the commissural axons after having crossed the floor plate. The protein is Spondin-1 (SPON1) of Gallus gallus (Chicken).